Consider the following 312-residue polypeptide: Methionyl-tRNA formyltransferase (312 aa).

The disordered stretch occupies residues 34 to 54; the sequence is PDAASGRRGKPQPSPVAREAA. 110 to 113 serves as a coordination point for (6S)-5,6,7,8-tetrahydrofolate; that stretch reads SLLP.

Belongs to the Fmt family.

The catalysed reaction is L-methionyl-tRNA(fMet) + (6R)-10-formyltetrahydrofolate = N-formyl-L-methionyl-tRNA(fMet) + (6S)-5,6,7,8-tetrahydrofolate + H(+). Functionally, attaches a formyl group to the free amino group of methionyl-tRNA(fMet). The formyl group appears to play a dual role in the initiator identity of N-formylmethionyl-tRNA by promoting its recognition by IF2 and preventing the misappropriation of this tRNA by the elongation apparatus. The polypeptide is Methionyl-tRNA formyltransferase (Mycobacterium tuberculosis (strain ATCC 25177 / H37Ra)).